The sequence spans 187 residues: Ubiquinone biosynthesis protein COQ4 homolog, mitochondrial (187 aa).

The Zn(2+) site is built by histidine 77, aspartate 78, histidine 81, and glutamate 93.

It belongs to the COQ4 family. As to quaternary structure, component of a multi-subunit COQ enzyme complex. Requires Zn(2+) as cofactor.

It is found in the mitochondrion inner membrane. The enzyme catalyses a 4-hydroxy-3-methoxy-5-(all-trans-polyprenyl)benzoate + H(+) = a 2-methoxy-6-(all-trans-polyprenyl)phenol + CO2. It participates in cofactor biosynthesis; ubiquinone biosynthesis. Functionally, lyase that catalyzes the C1-decarboxylation of 4-hydroxy-3-methoxy-5-(all-trans-polyprenyl)benzoic acid into 2-methoxy-6-(all-trans-polyprenyl)phenol during ubiquinone biosynthesis. This chain is Ubiquinone biosynthesis protein COQ4 homolog, mitochondrial, found in Leishmania infantum.